Consider the following 176-residue polypeptide: Ribosome maturation factor RimM (176 aa).

In terms of domain architecture, PRC barrel spans 96-176; that stretch reads PADEFYWRDL…QILVDWDPDF (81 aa).

It belongs to the RimM family. Binds ribosomal protein uS19.

The protein localises to the cytoplasm. Its function is as follows. An accessory protein needed during the final step in the assembly of 30S ribosomal subunit, possibly for assembly of the head region. Essential for efficient processing of 16S rRNA. May be needed both before and after RbfA during the maturation of 16S rRNA. It has affinity for free ribosomal 30S subunits but not for 70S ribosomes. This is Ribosome maturation factor RimM from Shewanella baltica (strain OS223).